Here is a 448-residue protein sequence, read N- to C-terminus: Mitochondrial distribution and morphology protein 10 (448 aa).

It belongs to the MDM10 family. In terms of assembly, component of the ER-mitochondria encounter structure (ERMES) or MDM complex, composed of MMM1, MDM10, MDM12 and MDM34. Associates with the mitochondrial outer membrane sorting assembly machinery SAM(core) complex.

The protein localises to the mitochondrion outer membrane. Component of the ERMES/MDM complex, which serves as a molecular tether to connect the endoplasmic reticulum and mitochondria. Components of this complex are involved in the control of mitochondrial shape and protein biogenesis and may function in phospholipid exchange. MDM10 is involved in the late assembly steps of the general translocase of the mitochondrial outer membrane (TOM complex). Functions in the TOM40-specific route of the assembly of outer membrane beta-barrel proteins, including the association of TOM40 with the receptor TOM22 and small TOM proteins. Can associate with the SAM(core) complex as well as the MDM12-MMM1 complex, both involved in late steps of the major beta-barrel assembly pathway, that is responsible for biogenesis of all outer membrane beta-barrel proteins. May act as a switch that shuttles between both complexes and channels precursor proteins into the TOM40-specific pathway. Plays a role in mitochondrial morphology and in the inheritance of mitochondria. The polypeptide is Mitochondrial distribution and morphology protein 10 (Podospora anserina (strain S / ATCC MYA-4624 / DSM 980 / FGSC 10383) (Pleurage anserina)).